The primary structure comprises 512 residues: Serine--tRNA ligase, cytoplasmic (512 aa).

N-acetylmethionine is present on M1. Positions 9–61 (RVDKGGDPALIRETQEKRFKDPGLVDQLVKADSEWRRCRFRADNLNKLKNLCS) are interaction with tRNA. The residue at position 241 (S241) is a Phosphoserine. The L-serine site is built by T271 and R302. ATP contacts are provided by residues 302 to 304 (RQE) and 318 to 321 (VHQF). At K323 the chain carries N6-acetyllysine. L-serine is bound at residue E325. 391–394 (ELVS) contacts ATP. An L-serine-binding site is contributed by N427. The tract at residues 472–512 (KPAPIDQEPSKKQKKQHEGSKKKAKEVTLENQLQNMEVTEA) is disordered. The span at 479–499 (EPSKKQKKQHEGSKKKAKEVT) shows a compositional bias: basic and acidic residues. A Nuclear localization signal motif is present at residues 482 to 494 (KKQKKQHEGSKKK). A compositionally biased stretch (polar residues) spans 500–512 (LENQLQNMEVTEA).

Belongs to the class-II aminoacyl-tRNA synthetase family. Type-1 seryl-tRNA synthetase subfamily. In terms of assembly, homodimer. The tRNA molecule may bind across the dimer. Interacts with SIRT2. Interacts with METTL6; interaction is required for the tRNA N(3)-methylcytidine methyltransferase activity of METTL6.

Its subcellular location is the cytoplasm. It is found in the nucleus. It catalyses the reaction tRNA(Ser) + L-serine + ATP = L-seryl-tRNA(Ser) + AMP + diphosphate + H(+). It carries out the reaction tRNA(Sec) + L-serine + ATP = L-seryl-tRNA(Sec) + AMP + diphosphate + H(+). It functions in the pathway aminoacyl-tRNA biosynthesis; selenocysteinyl-tRNA(Sec) biosynthesis; L-seryl-tRNA(Sec) from L-serine and tRNA(Sec): step 1/1. Its function is as follows. Catalyzes the attachment of serine to tRNA(Ser) in a two-step reaction: serine is first activated by ATP to form Ser-AMP and then transferred to the acceptor end of tRNA(Ser). Is probably also able to aminoacylate tRNA(Sec) with serine, to form the misacylated tRNA L-seryl-tRNA(Sec), which will be further converted into selenocysteinyl-tRNA(Sec). In the nucleus, binds to the VEGFA core promoter and prevents MYC binding and transcriptional activation by MYC. Recruits SIRT2 to the VEGFA promoter, promoting deacetylation of histone H4 at 'Lys-16' (H4K16). Thereby, inhibits the production of VEGFA and sprouting angiogenesis mediated by VEGFA. This is Serine--tRNA ligase, cytoplasmic (Sars1) from Rattus norvegicus (Rat).